The chain runs to 913 residues: Alanine--tRNA ligase (913 aa).

The Zn(2+) site is built by His608, His612, Cys711, and His715.

This sequence belongs to the class-II aminoacyl-tRNA synthetase family. The cofactor is Zn(2+).

The protein localises to the cytoplasm. The enzyme catalyses tRNA(Ala) + L-alanine + ATP = L-alanyl-tRNA(Ala) + AMP + diphosphate. Functionally, catalyzes the attachment of alanine to tRNA(Ala) in a two-step reaction: alanine is first activated by ATP to form Ala-AMP and then transferred to the acceptor end of tRNA(Ala). Also edits incorrectly charged Ser-tRNA(Ala) and Gly-tRNA(Ala) via its editing domain. The polypeptide is Alanine--tRNA ligase (Methanocorpusculum labreanum (strain ATCC 43576 / DSM 4855 / Z)).